The sequence spans 52 residues: Proteinase inhibitor (52 aa).

At Gln-1 the chain carries Pyrrolidone carboxylic acid. Intrachain disulfides connect Cys-3/Cys-40, Cys-6/Cys-24, Cys-7/Cys-36, and Cys-13/Cys-49.

It belongs to the protease inhibitor I20 (potato type II proteinase inhibitor) family.

Its subcellular location is the secreted. The chain is Proteinase inhibitor from Solanum melongena (Eggplant).